The chain runs to 184 residues: Thymidine kinase (184 aa).

ATP-binding positions include 10 to 17 (GPMYSGKT) and 83 to 86 (DEVQ). Glu84 acts as the Proton acceptor in catalysis. Zn(2+) contacts are provided by Cys140, Cys143, Cys173, and Cys176.

The protein belongs to the thymidine kinase family. Homotetramer.

It localises to the cytoplasm. The enzyme catalyses thymidine + ATP = dTMP + ADP + H(+). The sequence is that of Thymidine kinase from Thermotoga petrophila (strain ATCC BAA-488 / DSM 13995 / JCM 10881 / RKU-1).